We begin with the raw amino-acid sequence, 201 residues long: 3-isopropylmalate dehydratase small subunit (201 aa).

It belongs to the LeuD family. LeuD type 1 subfamily. As to quaternary structure, heterodimer of LeuC and LeuD.

The catalysed reaction is (2R,3S)-3-isopropylmalate = (2S)-2-isopropylmalate. Its pathway is amino-acid biosynthesis; L-leucine biosynthesis; L-leucine from 3-methyl-2-oxobutanoate: step 2/4. Functionally, catalyzes the isomerization between 2-isopropylmalate and 3-isopropylmalate, via the formation of 2-isopropylmaleate. The sequence is that of 3-isopropylmalate dehydratase small subunit from Shewanella sp. (strain MR-7).